Consider the following 338-residue polypeptide: MKVFYDKDADLSLIKGKNVTIIGYGSQGHAHAQNLNDSGVKVTVGLRRGGASWAKVEKAGLKVAEVADAVKSADVVMMLLPDEQIAAVYNAEVAPNMKEGASLAFAHGFNVHYGQVVPRADVDVWMVAPKAPGHTVRNTYTQGGGVPHLIAVHADKTGKARDLALSYAAANGGGKAGIIETNFREETETDLFGEQAVLCGGTVELIKAGFETLVEAGYAPEMAYFECLHELKLIVDLIYEGGIANMNYSISNNAEYGEYVTGPRVVTAATKDAMRQCLKDIQTGEYAKSFILENKAGAPTLISRRRLTEEHQIEVVGEKLRAMMPWIKANKLVDKSRN.

In terms of domain architecture, KARI N-terminal Rossmann spans 1–181; that stretch reads MKVFYDKDAD…GGGKAGIIET (181 aa). NADP(+)-binding positions include 24-27, Arg-47, and Ser-52; that span reads YGSQ. Residue His-107 is part of the active site. Gly-133 is an NADP(+) binding site. The 146-residue stretch at 182–327 folds into the KARI C-terminal knotted domain; the sequence is NFREETETDL…EKLRAMMPWI (146 aa). Asp-190, Glu-194, Glu-226, and Glu-230 together coordinate Mg(2+). Ser-251 lines the substrate pocket.

This sequence belongs to the ketol-acid reductoisomerase family. Mg(2+) is required as a cofactor.

The enzyme catalyses (2R)-2,3-dihydroxy-3-methylbutanoate + NADP(+) = (2S)-2-acetolactate + NADPH + H(+). It carries out the reaction (2R,3R)-2,3-dihydroxy-3-methylpentanoate + NADP(+) = (S)-2-ethyl-2-hydroxy-3-oxobutanoate + NADPH + H(+). The protein operates within amino-acid biosynthesis; L-isoleucine biosynthesis; L-isoleucine from 2-oxobutanoate: step 2/4. Its pathway is amino-acid biosynthesis; L-valine biosynthesis; L-valine from pyruvate: step 2/4. In terms of biological role, involved in the biosynthesis of branched-chain amino acids (BCAA). Catalyzes an alkyl-migration followed by a ketol-acid reduction of (S)-2-acetolactate (S2AL) to yield (R)-2,3-dihydroxy-isovalerate. In the isomerase reaction, S2AL is rearranged via a Mg-dependent methyl migration to produce 3-hydroxy-3-methyl-2-ketobutyrate (HMKB). In the reductase reaction, this 2-ketoacid undergoes a metal-dependent reduction by NADPH to yield (R)-2,3-dihydroxy-isovalerate. The chain is Ketol-acid reductoisomerase (NADP(+)) from Leptothrix cholodnii (strain ATCC 51168 / LMG 8142 / SP-6) (Leptothrix discophora (strain SP-6)).